A 421-amino-acid polypeptide reads, in one-letter code: E3 ubiquitin-protein ligase MARCHF4 (421 aa).

Positions 1-16 are cleaved as a signal peptide; it reads MLLAIGVIVWCWGLLS. The disordered stretch occupies residues 60-79; the sequence is ELNAEGNATSSATESHSLAN. A compositionally biased stretch (polar residues) spans 65–77; it reads GNATSSATESHSL. Residues 135–195 form an RING-CH-type zinc finger; sequence DSGVRTPLCR…ELCYYKYQVI (61 aa). Zn(2+) contacts are provided by C143, C146, C159, C161, H169, C172, C185, and C188. 2 helical membrane-spanning segments follow: residues 218-238 and 252-272; these read IAAA…LVWS and LFQI…ALIV. 2 disordered regions span residues 319–385 and 401–421; these read PLTH…LPDH and QEPR…VTTV. 2 stretches are compositionally biased toward polar residues: residues 367–380 and 403–412; these read TEPQ…NGQP and PRGQTSNSNR.

It is found in the golgi apparatus membrane. It catalyses the reaction S-ubiquitinyl-[E2 ubiquitin-conjugating enzyme]-L-cysteine + [acceptor protein]-L-lysine = [E2 ubiquitin-conjugating enzyme]-L-cysteine + N(6)-ubiquitinyl-[acceptor protein]-L-lysine.. It functions in the pathway protein modification; protein ubiquitination. In terms of biological role, E3 ubiquitin-protein ligase. E3 ubiquitin ligases accept ubiquitin from an E2 ubiquitin-conjugating enzyme in the form of a thioester and then directly transfer the ubiquitin to targeted substrates. This is E3 ubiquitin-protein ligase MARCHF4 (marchf4) from Danio rerio (Zebrafish).